Here is a 245-residue protein sequence, read N- to C-terminus: Purine nucleoside phosphorylase (245 aa).

His8 serves as a coordination point for a purine D-ribonucleoside. Residues 24 to 28 (GDPGR), Arg46, and 89 to 92 (RAGS) contribute to the phosphate site. An a purine D-ribonucleoside-binding site is contributed by 184-185 (ME). Asp207 (proton donor) is an active-site residue.

It belongs to the PNP/MTAP phosphorylase family. Homohexamer; trimer of homodimers.

It carries out the reaction inosine + phosphate = alpha-D-ribose 1-phosphate + hypoxanthine. The enzyme catalyses guanosine + phosphate = alpha-D-ribose 1-phosphate + guanine. The catalysed reaction is 2'-deoxyguanosine + phosphate = 2-deoxy-alpha-D-ribose 1-phosphate + guanine. It catalyses the reaction 2'-deoxyinosine + phosphate = 2-deoxy-alpha-D-ribose 1-phosphate + hypoxanthine. It participates in purine metabolism; purine nucleoside salvage. Its function is as follows. As part of the purine salvage pathway, catalyzes the phosphorolytic breakdown of the N-glycosidic bond in the beta-(deoxy)ribonucleoside molecules, with the formation of the corresponding free purine bases and pentose-1-phosphate. Preferentially acts on inosine and guanosine, and to a lesser extent on 2'-deoxyinosine and 2'-deoxyguanosine. In Plasmodium vivax (strain Salvador I), this protein is Purine nucleoside phosphorylase.